Consider the following 1150-residue polypeptide: ATP-dependent DNA helicase Q-like 4B (1150 aa).

Disordered stretches follow at residues 124 to 143 (TPAI…GSTF) and 154 to 179 (CAHN…FSSS). Residues 132 to 142 (TSRTSSTKGST) show a composition bias toward low complexity. Residues 327-361 (DHVEQLHQKRLLLKKQIQQLEILIHNKERKKSQCL) are a coiled coil. The span at 416–428 (YDISSGSEEREQS) shows a compositional bias: basic and acidic residues. The tract at residues 416–446 (YDISSGSEEREQSVSEVIDVTDTESSNDKKW) is disordered. Residues 478–653 (INATMSGCDV…VQALGLVNCV (176 aa)) enclose the Helicase ATP-binding domain. 491–498 (MPTGGGKS) serves as a coordination point for ATP. Positions 597–600 (DEAH) match the DEAH box motif. The region spanning 678-823 (DIDKFIRENH…QMKMGYNCKA (146 aa)) is the Helicase C-terminal domain. The HRDC domain maps to 1029–1111 (SNLSGILLTA…DSTINDHYKT (83 aa)). The segment at 1106 to 1150 (NDHYKTRPGSGKRRRDENVNPNVAEDDDPDWSASQSHKKVVKNKK) is disordered. Basic residues predominate over residues 1141 to 1150 (SHKKVVKNKK).

This sequence belongs to the helicase family. RecQ subfamily. Mg(2+) is required as a cofactor. It depends on Mn(2+) as a cofactor. In terms of tissue distribution, mostly expressed in roots, seedlings, shoots, shoot apical mersitem, flowers, and siliques.

The protein localises to the nucleus. The catalysed reaction is Couples ATP hydrolysis with the unwinding of duplex DNA by translocating in the 3'-5' direction.. The enzyme catalyses ATP + H2O = ADP + phosphate + H(+). 3'-5' DNA helicase that may play a role in the repair of DNA. Required to promote but not to suppress crossovers. The protein is ATP-dependent DNA helicase Q-like 4B (RECQL4B) of Arabidopsis thaliana (Mouse-ear cress).